Here is a 197-residue protein sequence, read N- to C-terminus: Small ribosomal subunit protein uS4B (197 aa).

Residues 88 to 151 (CRLDNIAYRI…RKNDEFADNF (64 aa)) form the S4 RNA-binding domain.

It belongs to the universal ribosomal protein uS4 family. As to quaternary structure, part of the 30S ribosomal subunit. Contacts protein S5. The interaction surface between S4 and S5 is involved in control of translational fidelity.

One of the primary rRNA binding proteins, it binds directly to 16S rRNA where it nucleates assembly of the body of the 30S subunit. Functionally, with S5 and S12 plays an important role in translational accuracy. The polypeptide is Small ribosomal subunit protein uS4B (Clostridium botulinum (strain Hall / ATCC 3502 / NCTC 13319 / Type A)).